Here is a 513-residue protein sequence, read N- to C-terminus: Interferon alpha/beta receptor 2 (513 aa).

The first 21 residues, 1 to 21 (MRSRCTVSAVGLLSLCLVVSA), serve as a signal peptide directing secretion. At 22-242 (SLETITPSAF…GQESGLSESA (221 aa)) the chain is on the extracellular side. Intrachain disulfides connect Cys-39/Cys-123 and Cys-85/Cys-93. N-linked (GlcNAc...) asparagine glycans are attached at residues Asn-42, Asn-58, Asn-65, Asn-78, and Asn-84. N-linked (GlcNAc...) asparagine glycosylation is found at Asn-149, Asn-191, and Asn-195. Cysteines 210 and 227 form a disulfide. The chain crosses the membrane as a helical span at residues 243–263 (IVGITTSCLVVMVFVSTIVML). Topologically, residues 264–513 (KRIGYICLKD…ADVGDGYIMR (250 aa)) are cytoplasmic. Residues 334–402 (GYTMHGLTGK…DPTGPYERRK (69 aa)) are disordered. A Phosphotyrosine modification is found at Tyr-335. Over residues 344-354 (PLQQTSDTSAS) the composition is skewed to polar residues. The span at 377-389 (GAEPELPTEAGAG) shows a compositional bias: low complexity. Ser-403 is subject to Phosphoserine. The mediates interaction with STAT2 (and required for the recruitment of USP18) stretch occupies residues 421–444 (GDNIIFNVNLNSVFLRVLHDEDAS). 2 positions are modified to phosphoserine: Ser-448 and Ser-465. Positions 458–513 (EGPQRTESDLRIAGGDRTQPPLPSLPSQDLWTEDGSSEKSDTSDSDADVGDGYIMR) are disordered. The residue at position 510 (Tyr-510) is a Phosphotyrosine.

The protein belongs to the type II cytokine receptor family. In terms of assembly, heterodimer with IFNAR1; forming the receptor for type I interferon. Interacts with the transcriptional factors STAT1 and STAT2. Interacts with JAK1. Interacts with USP18; indirectly via STAT2, it negatively regulates the assembly of the ternary interferon-IFNAR1-IFNAR2 complex and therefore type I interferon signaling. In terms of processing, phosphorylated on tyrosine residues upon interferon binding. Phosphorylation at Tyr-335 or Tyr-510 are sufficient to mediate interferon dependent activation of STAT1, STAT2 and STAT3 leading to antiproliferative effects on many different cell types. Widely expressed. Detected in liver, testis, kidney, salivary gland, thymus, brain, lung and placenta. Isoform 1, isoform 2 and isoform 3 are expressed in brain.

Its subcellular location is the cell membrane. It localises to the secreted. Its function is as follows. Together with IFNAR1, forms the heterodimeric receptor for type I interferons (including interferons alpha, beta, epsilon, omega and kappa). Type I interferon binding activates the JAK-STAT signaling cascade, resulting in transcriptional activation or repression of interferon-regulated genes that encode the effectors of the interferon response. Mechanistically, type I interferon-binding brings the IFNAR1 and IFNAR2 subunits into close proximity with one another, driving their associated Janus kinases (JAKs) (TYK2 bound to IFNAR1 and JAK1 bound to IFNAR2) to cross-phosphorylate one another. The activated kinases phosphorylate specific tyrosine residues on the intracellular domains of IFNAR1 and IFNAR2, forming docking sites for the STAT transcription factors (STAT1, STAT2 and STAT). STAT proteins are then phosphorylated by the JAKs, promoting their translocation into the nucleus to regulate expression of interferon-regulated genes. May be potent inhibitors of type I IFN receptor activity. This chain is Interferon alpha/beta receptor 2 (Ifnar2), found in Mus musculus (Mouse).